Reading from the N-terminus, the 46-residue chain is Protein krueppel (46 aa).

C2H2-type zinc fingers lie at residues 1–4, 10–32, and 38–46; these read MRLH, YQCL…LRVH, and YACEICPSR.

Belongs to the krueppel C2H2-type zinc-finger protein family.

It localises to the nucleus. Functionally, krueppel is a gap class segmentation protein. The polypeptide is Protein krueppel (Kr) (Pholcus phalangioides (Longbodied cellar spider)).